Consider the following 388-residue polypeptide: Reducing end xylose-releasing exo-oligoxylanase (388 aa).

E70 functions as the Proton donor in the catalytic mechanism. D263 acts as the Proton acceptor in catalysis.

It belongs to the glycosyl hydrolase 8 (cellulase D) family.

The enzyme catalyses Hydrolysis of (1-&gt;4)-beta-D-xylose residues from the reducing end of oligosaccharides.. Hydrolyzes xylooligosaccharides with a degree of polymerization of greater than or equal to 3, releasing xylose from the reducing end. Only hydrolyzes the beta anomers of xylooligosaccharides, with inversion of anomeric configuration. Hydrolyzes the glucose and xylose-based trisaccharides where xylose is located at the -1 subsite, GXX, XXG and GXG. Does not hydrolyze xylan, chitosan, lichenan, curdlan or carboxymethylcellulose. This Halalkalibacterium halodurans (strain ATCC BAA-125 / DSM 18197 / FERM 7344 / JCM 9153 / C-125) (Bacillus halodurans) protein is Reducing end xylose-releasing exo-oligoxylanase.